The sequence spans 513 residues: ATP synthase subunit alpha 1 (513 aa).

169–176 contacts ATP; that stretch reads GDRQCGKT.

It belongs to the ATPase alpha/beta chains family. In terms of assembly, F-type ATPases have 2 components, CF(1) - the catalytic core - and CF(0) - the membrane proton channel. CF(1) has five subunits: alpha(3), beta(3), gamma(1), delta(1), epsilon(1). CF(0) has three main subunits: a(1), b(2) and c(9-12). The alpha and beta chains form an alternating ring which encloses part of the gamma chain. CF(1) is attached to CF(0) by a central stalk formed by the gamma and epsilon chains, while a peripheral stalk is formed by the delta and b chains.

It is found in the cell inner membrane. The catalysed reaction is ATP + H2O + 4 H(+)(in) = ADP + phosphate + 5 H(+)(out). Produces ATP from ADP in the presence of a proton gradient across the membrane. The alpha chain is a regulatory subunit. The sequence is that of ATP synthase subunit alpha 1 from Burkholderia pseudomallei (strain 1710b).